The primary structure comprises 123 residues: Small ribosomal subunit protein bS6 (123 aa).

A disordered region spans residues 102-123 (MLKQKEERAPRREAEAKEFAAE). Residues 104–123 (KQKEERAPRREAEAKEFAAE) are compositionally biased toward basic and acidic residues.

This sequence belongs to the bacterial ribosomal protein bS6 family.

Binds together with bS18 to 16S ribosomal RNA. The polypeptide is Small ribosomal subunit protein bS6 (Vibrio vulnificus (strain CMCP6)).